The primary structure comprises 457 residues: MNAIILISVLGILSMMSEFIGLKKLIYPIILISLIGILGYNACTFWNNPETHYGMLVHNNYSVAFGSLLITITLFWFILFRSSYSSGEFNQGDHYALILFSTVGGLVLVSFSNMSMLFLGVEILSIPLYILAGSRKKDLHSVESSIKYFILGSFATGIMLLGIALIYGATGSFDFATIEKTASADPLFFIGITLLSIAFAFKVSAVPFHFWVPDVYSGAPTFITAFMSTFVKVAAFGAFYLMLDSIFESVPTYLSHTLIGLSALTIVVGNIAASYQDNVKRMLAFSGVSQAGYMLMVFPILTISAKTSLFVYLAGYAIANLIAIYIVQVVEKSKGDARVENFSGLGKSNPFLAFVLSLSLISLAGIPPAAGFFGKFYLFTEVIHAGNIYLVLIAILGSLISVYYYFKTIIAMYSGEEVSTLTNPAFGFTSVILAIMSALVVLIGLFPDILLQIGMNI.

14 consecutive transmembrane segments (helical) span residues 2 to 22 (NAII…FIGL), 25 to 45 (LIYP…ACTF), 60 to 80 (NYSV…FILF), 92 to 112 (GDHY…VSFS), 114 to 134 (MSML…LAGS), 149 to 169 (FILG…IYGA), 188 to 208 (FFIG…AVPF), 222 to 242 (FITA…FYLM), 253 to 273 (YLSH…NIAA), 283 to 303 (LAFS…ILTI), 310 to 330 (FVYL…VQVV), 353 to 373 (AFVL…AGFF), 382 to 402 (VIHA…LISV), and 431 to 451 (VILA…DILL).

Belongs to the complex I subunit 2 family. NDH-1 is composed of 14 different subunits. Subunits NuoA, H, J, K, L, M, N constitute the membrane sector of the complex.

The protein localises to the cell inner membrane. The catalysed reaction is a quinone + NADH + 5 H(+)(in) = a quinol + NAD(+) + 4 H(+)(out). NDH-1 shuttles electrons from NADH, via FMN and iron-sulfur (Fe-S) centers, to quinones in the respiratory chain. The immediate electron acceptor for the enzyme in this species is believed to be a menaquinone. Couples the redox reaction to proton translocation (for every two electrons transferred, four hydrogen ions are translocated across the cytoplasmic membrane), and thus conserves the redox energy in a proton gradient. The polypeptide is NADH-quinone oxidoreductase subunit N (Cytophaga hutchinsonii (strain ATCC 33406 / DSM 1761 / CIP 103989 / NBRC 15051 / NCIMB 9469 / D465)).